Consider the following 348-residue polypeptide: Fructose-1,6-bisphosphatase class 1 (348 aa).

4 residues coordinate Mg(2+): E107, D129, I131, and D132. Substrate is bound by residues 132 to 135 (DGSS), N224, Y252, and K282. E288 contacts Mg(2+).

Belongs to the FBPase class 1 family. Homotetramer. The cofactor is Mg(2+).

It is found in the cytoplasm. It catalyses the reaction beta-D-fructose 1,6-bisphosphate + H2O = beta-D-fructose 6-phosphate + phosphate. It participates in carbohydrate biosynthesis; Calvin cycle. The polypeptide is Fructose-1,6-bisphosphatase class 1 (Microcystis aeruginosa (strain NIES-843 / IAM M-2473)).